Here is a 158-residue protein sequence, read N- to C-terminus: Protein-export protein SecB (158 aa).

This sequence belongs to the SecB family. As to quaternary structure, homotetramer, a dimer of dimers. One homotetramer interacts with 1 SecA dimer.

The protein localises to the cytoplasm. In terms of biological role, one of the proteins required for the normal export of preproteins out of the cell cytoplasm. It is a molecular chaperone that binds to a subset of precursor proteins, maintaining them in a translocation-competent state. It also specifically binds to its receptor SecA. In Bartonella quintana (strain Toulouse) (Rochalimaea quintana), this protein is Protein-export protein SecB.